The chain runs to 384 residues: DNA replication and repair protein RecF (384 aa).

Position 30–37 (30–37) interacts with ATP; it reads GENAQGKT.

The protein belongs to the RecF family.

It localises to the cytoplasm. Its function is as follows. The RecF protein is involved in DNA metabolism; it is required for DNA replication and normal SOS inducibility. RecF binds preferentially to single-stranded, linear DNA. It also seems to bind ATP. The polypeptide is DNA replication and repair protein RecF (Levilactobacillus brevis (strain ATCC 367 / BCRC 12310 / CIP 105137 / JCM 1170 / LMG 11437 / NCIMB 947 / NCTC 947) (Lactobacillus brevis)).